The chain runs to 192 residues: FMN-dependent NADH:quinone oxidoreductase 1 (192 aa).

FMN-binding positions include Ser9 and 15–17; that span reads SYS.

Belongs to the azoreductase type 1 family. Homodimer. FMN is required as a cofactor.

The enzyme catalyses 2 a quinone + NADH + H(+) = 2 a 1,4-benzosemiquinone + NAD(+). It carries out the reaction N,N-dimethyl-1,4-phenylenediamine + anthranilate + 2 NAD(+) = 2-(4-dimethylaminophenyl)diazenylbenzoate + 2 NADH + 2 H(+). Its function is as follows. Quinone reductase that provides resistance to thiol-specific stress caused by electrophilic quinones. In terms of biological role, also exhibits azoreductase activity. Catalyzes the reductive cleavage of the azo bond in aromatic azo compounds to the corresponding amines. In Colwellia psychrerythraea (strain 34H / ATCC BAA-681) (Vibrio psychroerythus), this protein is FMN-dependent NADH:quinone oxidoreductase 1.